We begin with the raw amino-acid sequence, 247 residues long: tRNA pseudouridine synthase A (247 aa).

Asp-53 serves as the catalytic Nucleophile. Tyr-111 serves as a coordination point for substrate.

It belongs to the tRNA pseudouridine synthase TruA family. In terms of assembly, homodimer.

The catalysed reaction is uridine(38/39/40) in tRNA = pseudouridine(38/39/40) in tRNA. In terms of biological role, formation of pseudouridine at positions 38, 39 and 40 in the anticodon stem and loop of transfer RNAs. The protein is tRNA pseudouridine synthase A of Bacillus velezensis (strain DSM 23117 / BGSC 10A6 / LMG 26770 / FZB42) (Bacillus amyloliquefaciens subsp. plantarum).